A 139-amino-acid chain; its full sequence is Trafficking protein particle complex subunit 2-like protein (139 aa).

Belongs to the TRAPP small subunits family. Sedlin subfamily. In terms of assembly, component of the multisubunit TRAPP (transport protein particle) complex, which includes at least TRAPPC2, TRAPPC2L, TRAPPC3, TRAPPC3L, TRAPPC4, TRAPPC5, TRAPPC8, TRAPPC9, TRAPPC10, TRAPPC11 and TRAPPC12. Interacts with the heterodimer TRAPPC3-TRAPPC6A.

The protein localises to the cytoplasm. Its subcellular location is the perinuclear region. It localises to the endoplasmic reticulum. The protein resides in the golgi apparatus. May play a role in vesicular transport from endoplasmic reticulum to Golgi. This is Trafficking protein particle complex subunit 2-like protein (Trappc2l) from Rattus norvegicus (Rat).